A 558-amino-acid polypeptide reads, in one-letter code: SPATS2-like protein (558 aa).

Ala-2 is modified (N-acetylalanine). The segment covering 63–79 has biased composition (basic residues); the sequence is GKKKNNKRKRSKSKQHQ. Disordered regions lie at residues 63–134 and 157–201; these read GKKK…EKKI and KLSL…KSNT. Residues 80–92 show a composition bias toward basic and acidic residues; that stretch reads GNKDAKDKVERPE. Ser-120 bears the Phosphoserine mark. Residues 271-344 are a coiled coil; that stretch reads LMAEMDKVKE…ARFSCDIEQL (74 aa). The disordered stretch occupies residues 380–525; the sequence is TSGKQSNFSR…DTSEARPFRG (146 aa). 3 stretches are compositionally biased toward polar residues: residues 381–390, 410–432, and 440–456; these read SGKQSNFSRK, SLPS…GSSN, and QYHN…QGSG. A Phosphoserine modification is found at Ser-455. Residues 469–485 show a composition bias toward basic residues; that stretch reads HEHRRQPHNGFRPKNKG. Over residues 513-522 the composition is skewed to basic and acidic residues; sequence HAADTSEARP.

It belongs to the SPATS2 family.

The protein localises to the cytoplasm. It localises to the nucleus. The protein resides in the nucleolus. This chain is SPATS2-like protein (SPATS2L), found in Homo sapiens (Human).